The primary structure comprises 462 residues: SET domain-containing protein SmydA-8, isoform A (462 aa).

The 233-residue stretch at 55 to 287 (PNWTISSSTV…KGGEITTTYT (233 aa)) folds into the SET domain.

The protein belongs to the class V-like SAM-binding methyltransferase superfamily.

The sequence is that of SET domain-containing protein SmydA-8, isoform A from Drosophila melanogaster (Fruit fly).